A 667-amino-acid chain; its full sequence is Bifunctional polymyxin resistance protein ArnA (667 aa).

The interval 1–304 (MKAIVFAYHD…EMGIVTDVRL (304 aa)) is formyltransferase ArnAFT. Histidine 104 (proton donor; for formyltransferase activity) is an active-site residue. (6R)-10-formyltetrahydrofolate is bound by residues arginine 114 and 136 to 140 (VKKAD). The segment at 314–667 (RRTRVLILGV…TAAPKDELNA (354 aa)) is dehydrogenase ArnADH. Residues aspartate 347 and 368 to 369 (DI) each bind NAD(+). UDP-alpha-D-glucuronate is bound by residues alanine 393, tyrosine 398, and 432-433 (TS). Glutamate 434 (proton acceptor; for decarboxylase activity) is an active-site residue. UDP-alpha-D-glucuronate-binding positions include arginine 460, asparagine 492, 526-535 (KLVDGGAQKR), and tyrosine 613. The active-site Proton donor; for decarboxylase activity is the arginine 619.

It in the N-terminal section; belongs to the Fmt family. UDP-L-Ara4N formyltransferase subfamily. In the C-terminal section; belongs to the NAD(P)-dependent epimerase/dehydratase family. UDP-glucuronic acid decarboxylase subfamily. In terms of assembly, homohexamer, formed by a dimer of trimers.

It catalyses the reaction UDP-alpha-D-glucuronate + NAD(+) = UDP-beta-L-threo-pentopyranos-4-ulose + CO2 + NADH. The catalysed reaction is UDP-4-amino-4-deoxy-beta-L-arabinose + (6R)-10-formyltetrahydrofolate = UDP-4-deoxy-4-formamido-beta-L-arabinose + (6S)-5,6,7,8-tetrahydrofolate + H(+). It functions in the pathway nucleotide-sugar biosynthesis; UDP-4-deoxy-4-formamido-beta-L-arabinose biosynthesis; UDP-4-deoxy-4-formamido-beta-L-arabinose from UDP-alpha-D-glucuronate: step 1/3. Its pathway is nucleotide-sugar biosynthesis; UDP-4-deoxy-4-formamido-beta-L-arabinose biosynthesis; UDP-4-deoxy-4-formamido-beta-L-arabinose from UDP-alpha-D-glucuronate: step 3/3. The protein operates within bacterial outer membrane biogenesis; lipopolysaccharide biosynthesis. In terms of biological role, bifunctional enzyme that catalyzes the oxidative decarboxylation of UDP-glucuronic acid (UDP-GlcUA) to UDP-4-keto-arabinose (UDP-Ara4O) and the addition of a formyl group to UDP-4-amino-4-deoxy-L-arabinose (UDP-L-Ara4N) to form UDP-L-4-formamido-arabinose (UDP-L-Ara4FN). The modified arabinose is attached to lipid A and is required for resistance to polymyxin and cationic antimicrobial peptides. This chain is Bifunctional polymyxin resistance protein ArnA, found in Yersinia pseudotuberculosis serotype O:3 (strain YPIII).